A 334-amino-acid chain; its full sequence is Probable fructose-bisphosphate aldolase class 1 (334 aa).

This sequence belongs to the class I fructose-bisphosphate aldolase family.

It catalyses the reaction beta-D-fructose 1,6-bisphosphate = D-glyceraldehyde 3-phosphate + dihydroxyacetone phosphate. Its pathway is carbohydrate degradation; glycolysis; D-glyceraldehyde 3-phosphate and glycerone phosphate from D-glucose: step 4/4. This chain is Probable fructose-bisphosphate aldolase class 1, found in Xanthomonas campestris pv. campestris (strain ATCC 33913 / DSM 3586 / NCPPB 528 / LMG 568 / P 25).